The following is a 232-amino-acid chain: Ureidoacrylate amidohydrolase RutB (232 aa).

Asp-26 acts as the Proton acceptor in catalysis. Residue Lys-135 is part of the active site. Cys-168 serves as the catalytic Nucleophile.

It belongs to the isochorismatase family. RutB subfamily.

It carries out the reaction (Z)-3-ureidoacrylate + H2O + H(+) = (Z)-3-aminoacrylate + NH4(+) + CO2. It catalyses the reaction (Z)-3-ureidoacrylate + H2O = (Z)-3-aminoacrylate + carbamate + H(+). The catalysed reaction is (Z)-2-methylureidoacrylate + H2O + H(+) = (Z)-2-methylaminoacrylate + NH4(+) + CO2. Hydrolyzes ureidoacrylate to form aminoacrylate and carbamate. The carbamate hydrolyzes spontaneously, thereby releasing one of the nitrogen atoms of the pyrimidine ring as ammonia and one of its carbon atoms as CO2. The polypeptide is Ureidoacrylate amidohydrolase RutB (Cronobacter sakazakii (strain ATCC BAA-894) (Enterobacter sakazakii)).